Here is a 478-residue protein sequence, read N- to C-terminus: F-box protein YDR306C (478 aa).

A compositionally biased stretch (basic residues) spans 1-14 (MANKSRPKKIKAPY). Disordered regions lie at residues 1-32 (MANK…DNKA) and 67-101 (RLSN…VIES). Residues 80–90 (QSPSSSSTSSS) are compositionally biased toward low complexity. Residues 91–101 (KGEKNGKVIES) are compositionally biased toward basic and acidic residues. The F-box domain occupies 112–173 (KMVLPWEIQH…CLPKLYYAPA (62 aa)).

As to quaternary structure, interacts with SKP1. Component of the probable SCF(YDR306C) complex containing CDC53, SKP1, RBX1 and YDR306C. Autoubiquitinated by the E3 ubiquitin ligase complex in conjunction with the E2 enzyme CDC34.

It functions in the pathway protein modification; protein ubiquitination. In terms of biological role, substrate recognition component of a SCF (SKP1-CUL1-F-box protein) E3 ubiquitin-protein ligase complex which mediates the ubiquitination and subsequent proteasomal degradation of target proteins. Probably recognizes and binds to phosphorylated target proteins. This is F-box protein YDR306C from Saccharomyces cerevisiae (strain ATCC 204508 / S288c) (Baker's yeast).